Consider the following 309-residue polypeptide: 2-phospho-L-lactate transferase (309 aa).

Residues Asp-48 and Lys-87 each coordinate 7,8-didemethyl-8-hydroxy-5-deazariboflavin.

This sequence belongs to the CofD family. Homodimer. It depends on Mg(2+) as a cofactor.

The catalysed reaction is (2S)-lactyl-2-diphospho-5'-guanosine + 7,8-didemethyl-8-hydroxy-5-deazariboflavin = oxidized coenzyme F420-0 + GMP + H(+). Its pathway is cofactor biosynthesis; coenzyme F420 biosynthesis. Catalyzes the transfer of the 2-phospholactate moiety from (2S)-lactyl-2-diphospho-5'-guanosine to 7,8-didemethyl-8-hydroxy-5-deazariboflavin (FO) with the formation of oxidized coenzyme F420-0 and GMP. This is 2-phospho-L-lactate transferase from Methanosarcina barkeri (strain Fusaro / DSM 804).